We begin with the raw amino-acid sequence, 630 residues long: MGINTSSAQSSGAASIARSSVNVKSGNRHLSSNKKSATSALEERASRPSILVTFLVLAGTILSLYIWPILSPDLFFANQRCSFKYKNKGSQRVVVEGKNGVVATEEETCSQIGVGILKAGGNAVDAAIASGICIGAVNSFSSGIGGGGFMLIRHPNGTAHSLNFRETAPAGASKNMFHGNSTLSQVGGLSVAVPGEIAGYERAWKMYGSLPWHKLFEPTIRLMRDGMPMPKELASRIRRPEFSYFKTHPDWSKIFAPEGVFLHVGEKFYRPALASTLEEIAKFGPEVFYTGKIAERLVKFVQQQGGILTMEDMANFSVVVEEPIYGNFYDREVITCGSPCSGEALILGLNVLSKVDLSEGTSILGCEMTDIGVHHLIETMKWMSAGRTVLADPTFYNNTDHVEQLLSLEYADEIRNNISNERTFDFTHYKAEYDFPNDHGTTHLSVIDKDNMAVGLTASINLMFGSQLLEPETGIILNDHMDDFASPGIVNAFGLSPSPYNFIAPGKRPQSSAVPTILVYNGEVEMVLGGSGGSRIVTAVLDTIIKKYKWGKSLLESVESPRFHHQLMPNIVYIDETVEIEVLRALEKFGHIVDLIPVQYPFSEIQAVFRTNGTLYGLSDSRKQAVAAAY.

At 1–49 the chain is on the cytoplasmic side; that stretch reads MGINTSSAQSSGAASIARSSVNVKSGNRHLSSNKKSATSALEERASRPS. Residues 50–70 form a helical; Signal-anchor for type II membrane protein membrane-spanning segment; it reads ILVTFLVLAGTILSLYIWPIL. At 71–630 the chain is on the lumenal side; the sequence is SPDLFFANQR…SRKQAVAAAY (560 aa). N-linked (GlcNAc...) asparagine glycosylation occurs at asparagine 156. Arginine 165 lines the L-glutamate pocket. Residues asparagine 180, asparagine 315, asparagine 397, and asparagine 417 are each glycosylated (N-linked (GlcNAc...) asparagine). Threonine 441 acts as the Nucleophile in catalysis. L-glutamate is bound by residues serine 459, asparagine 461, aspartate 483, 511 to 512, and 532 to 533; these read SS and GG. Asparagine 612 carries an N-linked (GlcNAc...) asparagine glycan.

Belongs to the gamma-glutamyltransferase family. In terms of assembly, heterodimer composed of the light and heavy chains. The active site is located in the light chain. Cleaved by autocatalysis into a large and a small subunit.

Its subcellular location is the endoplasmic reticulum membrane. It carries out the reaction an N-terminal (5-L-glutamyl)-[peptide] + an alpha-amino acid = 5-L-glutamyl amino acid + an N-terminal L-alpha-aminoacyl-[peptide]. The catalysed reaction is glutathione + H2O = L-cysteinylglycine + L-glutamate. The enzyme catalyses an S-substituted glutathione + H2O = an S-substituted L-cysteinylglycine + L-glutamate. The protein operates within sulfur metabolism; glutathione metabolism. Functionally, catalyzes the transfer of the gamma-glutamyl moiety of glutathione (GSH) and other gamma-glutamyl compounds to amino acids and peptides. Major GSH-degrading enzyme, catalyzing the hydrolytic release of L-glutamate from GSH. This is Glutathione hydrolase proenzyme 1 (ggt1) from Schizosaccharomyces pombe (strain 972 / ATCC 24843) (Fission yeast).